A 127-amino-acid chain; its full sequence is Major sperm protein isoform beta (127 aa).

Alanine 2 carries the post-translational modification N-acetylalanine. An MSP domain is found at 9–126 (DINTQPGSKI…RRKNLPIEYN (118 aa)).

Forms filaments 10 nm wide, with a characteristic substructure repeating axially at 9 nm. As to expression, sperm.

The protein localises to the cell projection. It localises to the pseudopodium. The protein resides in the cytoplasm. Its subcellular location is the cytoskeleton. Its function is as follows. Central component in molecular interactions underlying sperm crawling. Forms an extensive filament system that extends from sperm villipoda, along the leading edge of the pseudopod. This is Major sperm protein isoform beta from Ascaris suum (Pig roundworm).